The primary structure comprises 364 residues: tRNA 2-selenouridine synthase (364 aa).

The 124-residue stretch at 14-137 (LLADTPLIDV…LRQTAIQATW (124 aa)) folds into the Rhodanese domain. Catalysis depends on Cys97, which acts as the S-selanylcysteine intermediate.

It belongs to the SelU family. As to quaternary structure, monomer.

The enzyme catalyses 5-methylaminomethyl-2-thiouridine(34) in tRNA + selenophosphate + (2E)-geranyl diphosphate + H2O + H(+) = 5-methylaminomethyl-2-selenouridine(34) in tRNA + (2E)-thiogeraniol + phosphate + diphosphate. It catalyses the reaction 5-methylaminomethyl-2-thiouridine(34) in tRNA + (2E)-geranyl diphosphate = 5-methylaminomethyl-S-(2E)-geranyl-thiouridine(34) in tRNA + diphosphate. It carries out the reaction 5-methylaminomethyl-S-(2E)-geranyl-thiouridine(34) in tRNA + selenophosphate + H(+) = 5-methylaminomethyl-2-(Se-phospho)selenouridine(34) in tRNA + (2E)-thiogeraniol. The catalysed reaction is 5-methylaminomethyl-2-(Se-phospho)selenouridine(34) in tRNA + H2O = 5-methylaminomethyl-2-selenouridine(34) in tRNA + phosphate. Involved in the post-transcriptional modification of the uridine at the wobble position (U34) of tRNA(Lys), tRNA(Glu) and tRNA(Gln). Catalyzes the conversion of 2-thiouridine (S2U-RNA) to 2-selenouridine (Se2U-RNA). Acts in a two-step process involving geranylation of 2-thiouridine (S2U) to S-geranyl-2-thiouridine (geS2U) and subsequent selenation of the latter derivative to 2-selenouridine (Se2U) in the tRNA chain. This Salmonella paratyphi B (strain ATCC BAA-1250 / SPB7) protein is tRNA 2-selenouridine synthase.